A 289-amino-acid polypeptide reads, in one-letter code: Acetyl-coenzyme A carboxylase carboxyl transferase subunit beta (289 aa).

Residues 28–289 enclose the CoA carboxyltransferase N-terminal domain; sequence VMTKCPECKK…QGGEMAVWQS (262 aa). Residues Cys32, Cys35, Cys51, and Cys54 each contribute to the Zn(2+) site. A C4-type zinc finger spans residues 32-54; that stretch reads CPECKKIMYTKELLKNLKVCVNC.

This sequence belongs to the AccD/PCCB family. Acetyl-CoA carboxylase is a heterohexamer composed of biotin carboxyl carrier protein (AccB), biotin carboxylase (AccC) and two subunits each of ACCase subunit alpha (AccA) and ACCase subunit beta (AccD). Zn(2+) serves as cofactor.

Its subcellular location is the cytoplasm. The catalysed reaction is N(6)-carboxybiotinyl-L-lysyl-[protein] + acetyl-CoA = N(6)-biotinyl-L-lysyl-[protein] + malonyl-CoA. It functions in the pathway lipid metabolism; malonyl-CoA biosynthesis; malonyl-CoA from acetyl-CoA: step 1/1. In terms of biological role, component of the acetyl coenzyme A carboxylase (ACC) complex. Biotin carboxylase (BC) catalyzes the carboxylation of biotin on its carrier protein (BCCP) and then the CO(2) group is transferred by the transcarboxylase to acetyl-CoA to form malonyl-CoA. This Bacillus cereus (strain ATCC 14579 / DSM 31 / CCUG 7414 / JCM 2152 / NBRC 15305 / NCIMB 9373 / NCTC 2599 / NRRL B-3711) protein is Acetyl-coenzyme A carboxylase carboxyl transferase subunit beta.